Consider the following 427-residue polypeptide: G2/mitotic-specific cyclin-B1 (427 aa).

A disordered region spans residues 33–126 (ATSKPGLRPR…DTPSPSPMET (94 aa)). Lysine 73 carries the post-translational modification N6-acetyllysine. Residues 100–110 (EPEHVKEDKLS) are compositionally biased toward basic and acidic residues. At serine 120 the chain carries Phosphoserine; by CDK1. The residue at position 122 (serine 122) is a Phosphoserine. Serine 127 bears the Phosphoserine; by PLK1 mark. Serine 141 bears the Phosphoserine mark. Interaction with CDK2 stretches follow at residues 163–171 (EYVKDIYAY) and 252–255 (YEEM). Threonine 315 carries the post-translational modification Phosphothreonine.

It belongs to the cyclin family. Cyclin AB subfamily. In terms of assembly, interacts with the CDC2 protein kinase to form a serine/threonine kinase holoenzyme complex also known as maturation promoting factor (MPF). The cyclin subunit imparts substrate specificity to the complex. Binds HEI10. Interacts with catalytically active RALBP1 and CDC2 during mitosis to form an endocytotic complex during interphase. Interacts with CCNF; interaction is required for nuclear localization. Interacts with CDK5RAP3. Interacts with RFPL4A and UBE2A. Interacts with INCA1. Ubiquitinated by the SCF(NIPA) complex during interphase, leading to its destruction. Deubiquitinated by USP22 during G2/M phase. In terms of processing, phosphorylated by PLK1 at Ser-127 on centrosomes during prophase: phosphorylation by PLK1 does not cause nuclear import. Phosphorylation at Ser-141 was also reported to be mediated by PLK1 but Ser-127 seems to be the primary phosphorylation site.

It is found in the cytoplasm. It localises to the nucleus. The protein resides in the cytoskeleton. Its subcellular location is the microtubule organizing center. The protein localises to the centrosome. In terms of biological role, essential for the control of the cell cycle at the G2/M (mitosis) transition. The polypeptide is G2/mitotic-specific cyclin-B1 (CCNB1) (Bos taurus (Bovine)).